Here is a 395-residue protein sequence, read N- to C-terminus: GDP-mannose 4,6 dehydratase (395 aa).

Polar residues-rich tracts occupy residues 1–13 (MLNTRLIAMSTSD) and 24–36 (ESSSNGSKDQNGT). The tract at residues 1 to 44 (MLNTRLIAMSTSDGAPETKKQRPESSSNGSKDQNGTEAGAEGDS) is disordered. Residues 53 to 58 (GITGQD), 109 to 110 (DM), 131 to 135 (LAAQS), and Y146 each bind NADP(+). T178 is an active-site residue. Active-site nucleophile residues include E180 and Y202. K206, H232, and R237 together coordinate NADP(+).

This sequence belongs to the NAD(P)-dependent epimerase/dehydratase family. GDP-mannose 4,6-dehydratase subfamily. Requires NADP(+) as cofactor.

The catalysed reaction is GDP-alpha-D-mannose = GDP-4-dehydro-alpha-D-rhamnose + H2O. Its pathway is nucleotide-sugar biosynthesis; GDP-L-fucose biosynthesis via de novo pathway; GDP-L-fucose from GDP-alpha-D-mannose: step 1/2. Catalyzes the conversion of GDP-D-mannose to GDP-4-dehydro-6-deoxy-D-mannose (also known as GDP-4-keto-6-deoxy-D-mannose or GDP-4-dehydro-alpha-D-rhamnose), an essential step in the synthesis of GDP-fucose from GDP-mannose. The chain is GDP-mannose 4,6 dehydratase (Gmd) from Drosophila melanogaster (Fruit fly).